Consider the following 360-residue polypeptide: DNA replication and repair protein RecF (360 aa).

33–40 (GENGSGKT) is an ATP binding site.

It belongs to the RecF family.

The protein resides in the cytoplasm. In terms of biological role, the RecF protein is involved in DNA metabolism; it is required for DNA replication and normal SOS inducibility. RecF binds preferentially to single-stranded, linear DNA. It also seems to bind ATP. This Rickettsia peacockii (strain Rustic) protein is DNA replication and repair protein RecF.